The following is a 334-amino-acid chain: uncharacterized protein (334 aa).

WD repeat units follow at residues 56–86, 98–128, 139–169, 220–250, and 262–291; these read LKGE…KLWT, KPVA…RIWD, GHTS…EGWS, TDQG…RVFN, and LDDG…RVWN.

This is an uncharacterized protein from Synechocystis sp. (strain ATCC 27184 / PCC 6803 / Kazusa).